The sequence spans 158 residues: ABA-responsive protein ABR18 (158 aa).

It belongs to the BetVI family.

The protein is ABA-responsive protein ABR18 of Pisum sativum (Garden pea).